The sequence spans 318 residues: tRNA dimethylallyltransferase (318 aa).

16–23 (GPTASGKS) is an ATP binding site. 18–23 (TASGKS) is a binding site for substrate. Interaction with substrate tRNA stretches follow at residues 41-44 (DSRQ) and 165-169 (QRLIR).

This sequence belongs to the IPP transferase family. In terms of assembly, monomer. Requires Mg(2+) as cofactor.

The catalysed reaction is adenosine(37) in tRNA + dimethylallyl diphosphate = N(6)-dimethylallyladenosine(37) in tRNA + diphosphate. Functionally, catalyzes the transfer of a dimethylallyl group onto the adenine at position 37 in tRNAs that read codons beginning with uridine, leading to the formation of N6-(dimethylallyl)adenosine (i(6)A). The chain is tRNA dimethylallyltransferase from Pelodictyon phaeoclathratiforme (strain DSM 5477 / BU-1).